The sequence spans 462 residues: tRNA-2-methylthio-N(6)-dimethylallyladenosine synthase (462 aa).

The region spanning 1–116 is the MTTase N-terminal domain; that stretch reads MKLFIQTLGC…ITQVLERPKA (116 aa). 6 residues coordinate [4Fe-4S] cluster: Cys10, Cys47, Cys79, Cys148, Cys152, and Cys155. A Radical SAM core domain is found at 134 to 370; sequence QGMGIKAHLN…NLHKEILSKK (237 aa). The region spanning 372–436 is the TRAM domain; that stretch reads QLEIGRIHNV…GGGLMGRFIN (65 aa).

The protein belongs to the methylthiotransferase family. MiaB subfamily. In terms of assembly, monomer. [4Fe-4S] cluster is required as a cofactor.

It is found in the cytoplasm. It carries out the reaction N(6)-dimethylallyladenosine(37) in tRNA + (sulfur carrier)-SH + AH2 + 2 S-adenosyl-L-methionine = 2-methylsulfanyl-N(6)-dimethylallyladenosine(37) in tRNA + (sulfur carrier)-H + 5'-deoxyadenosine + L-methionine + A + S-adenosyl-L-homocysteine + 2 H(+). Its function is as follows. Catalyzes the methylthiolation of N6-(dimethylallyl)adenosine (i(6)A), leading to the formation of 2-methylthio-N6-(dimethylallyl)adenosine (ms(2)i(6)A) at position 37 in tRNAs that read codons beginning with uridine. In Helicobacter hepaticus (strain ATCC 51449 / 3B1), this protein is tRNA-2-methylthio-N(6)-dimethylallyladenosine synthase.